Here is a 107-residue protein sequence, read N- to C-terminus: NLWQFGRENQEVMGQHLPFHYLSYGCYCGWGGIEPKCCYVHDCCYGKLDLYTYSKETGDLVCGGDDPCQKQLCECDRVAALCFQDNKDTYDQKPYNAENCQEASEAC.

6 disulfide bridges follow: Cys26–Cys100, Cys28–Cys38, Cys37–Cys82, Cys43–Cys107, Cys44–Cys75, and Cys62–Cys73. Residues Tyr27, Gly29, and Gly31 each coordinate Ca(2+). Residue His41 is part of the active site. Asp42 contributes to the Ca(2+) binding site. Residue Asp76 is part of the active site.

It depends on Ca(2+) as a cofactor. In terms of tissue distribution, expressed by the venom gland.

It is found in the secreted. It catalyses the reaction a 1,2-diacyl-sn-glycero-3-phosphocholine + H2O = a 1-acyl-sn-glycero-3-phosphocholine + a fatty acid + H(+). Functionally, PLA2 catalyzes the calcium-dependent hydrolysis of the 2-acyl groups in 3-sn-phosphoglycerides. The protein is Acidic phospholipase A2 2 of Bothrops insularis (Golden lancehead).